The sequence spans 61 residues: uncharacterized protein (61 aa).

An N-terminal signal peptide occupies residues 1–30; sequence MDVEVANMAAKLRVRGLKLPNAIVVSTAIL.

This is an uncharacterized protein from Archaeoglobus fulgidus (strain ATCC 49558 / DSM 4304 / JCM 9628 / NBRC 100126 / VC-16).